We begin with the raw amino-acid sequence, 776 residues long: Rho guanine nucleotide exchange factor 6 (776 aa).

The region spanning 1-111 is the Calponin-homology (CH) domain; it reads MNPEEQIVTW…TLLAVNKATE (111 aa). The disordered stretch occupies residues 115 to 151; sequence SERPCGRSSSLSAANTSQTNPQGAVSSTVSGLQRQSK. Positions 121 to 151 are enriched in polar residues; sequence RSSSLSAANTSQTNPQGAVSSTVSGLQRQSK. The residue at position 126 (Ser-126) is a Phosphoserine. The residue at position 133 (Thr-133) is a Phosphothreonine. Phosphoserine is present on residues Ser-144 and Ser-150. Positions 160–219 constitute an SH3 domain; that stretch reads SHQLIVKARFNFKQTNEDELSVCKGDIIYVTRVEEGGWWEGTLNGRTGWFPSNYVREIKS. Residue Ser-225 is modified to Phosphoserine. In terms of domain architecture, DH spans 241-421; it reads YYTVVLQNIL…KTLMGQCQDL (181 aa). In terms of domain architecture, PH spans 443-548; it reads DIKNLGNVIF…WLEQLNRLIR (106 aa). Ser-488 is subject to Phosphoserine. Over residues 561–572 the composition is skewed to low complexity; that stretch reads SSSCSAHSSFSS. Positions 561–581 are disordered; it reads SSSCSAHSSFSSTGQPRGPLE. A phosphoserine mark is found at Ser-640 and Ser-684.

As to quaternary structure, interacts with PAK kinases through the SH3 domain. Interacts with GIT1. Component of cytoplasmic complexes, which also contain PXN, GIT1 and PAK1. Interacts with PARVB. Interacts with BIN2. Identified in a complex with BIN2 and GIT2. Interacts with PARVG; the guanine nucleotide exchange factor activity of ARHGEF6 is essential for PARVG-induced enhancement of cell spreading. As to expression, ubiquitous.

It is found in the cell projection. The protein localises to the lamellipodium. Its function is as follows. Acts as a RAC1 guanine nucleotide exchange factor (GEF). This chain is Rho guanine nucleotide exchange factor 6 (ARHGEF6), found in Homo sapiens (Human).